Here is a 1074-residue protein sequence, read N- to C-terminus: ADAMTS-like protein 4 (1074 aa).

The first 24 residues, 1 to 24 (MENWTGRPWLYLLLLLSLPQLCLD), serve as a signal peptide directing secretion. Residues 48 to 93 (GPWVQWASCSQPCGVGVQRRSRTCQLPTVQLHPSLPLPPRPPRHPE) enclose the TSP type-1 1 domain. The interval 77-342 (QLHPSLPLPP…QHPGAWLPLL (266 aa)) is disordered. The span at 103–119 (RPQTSPETLPLYRTQSR) shows a compositional bias: polar residues. Basic and acidic residues predominate over residues 132-152 (LGREETQEIRAARRSRLRDPI). Polar residues predominate over residues 206-226 (ANGSPQTELPPTELSVHTPSP). Residues 310–323 (GQQGQGPWGTGGTP) show a composition bias toward gly residues. An N-linked (GlcNAc...) (complex) asparagine glycan is attached at Asn-490. TSP type-1 domains lie at 723-782 (CPPY…QLRL), 783-842 (CGHW…GPCT), 845-909 (WFHS…GPCE), 910-969 (RTWR…QGQA), and 970-1026 (CQDR…QPCS). N-linked (GlcNAc...) asparagine glycosylation is present at Asn-773. The 38-residue stretch at 1029-1066 (PDDQCKDSSPHCPLVVQARLCVYPYYTATCCRSCAHVL) folds into the PLAC domain.

In terms of assembly, interacts with CTSB. Interacts with FBN1. N-glycosylated. Can be O-fucosylated by POFUT2 on a serine or a threonine residue found within the consensus sequence C1-X(2)-(S/T)-C2-G of the TSP type-1 repeat domains where C1 and C2 are the first and second cysteine residue of the repeat, respectively. Fucosylated repeats can then be further glycosylated by the addition of a beta-1,3-glucose residue by the glucosyltransferase, B3GALTL. Fucosylation mediates the efficient secretion of ADAMTS family members. Can also be C-glycosylated with one or two mannose molecules on tryptophan residues within the consensus sequence W-X-X-W of the TPRs. N- and C-glycosylations can also facilitate secretion. In terms of tissue distribution, expressed in colon, heart, leukocyte, liver, lung, skeletal muscle, spleen, testis and placenta. Weaker expression in bone marrow, brain tissue, kidney and pancreas. Expression studies in fetal tissues reveal strong expression in heart, kidney, liver, lung and skeletal muscle, but weaker expression in fetal brain and skin.

It is found in the secreted. The protein localises to the extracellular space. Its subcellular location is the extracellular matrix. Its function is as follows. Positive regulation of apoptosis. May facilitate FBN1 microfibril biogenesis. This chain is ADAMTS-like protein 4 (ADAMTSL4), found in Homo sapiens (Human).